The following is a 692-amino-acid chain: Acyl-coenzyme A oxidase 2, peroxisomal (692 aa).

A peroxisome-targeting transit peptide spans 1–49 (MESRREKNPMTEEESDGLIAARRIQRLSLHLSPSLTPSPSLPLVQTETC). Residues T186, S192, G225, R365, Q384, G452, and T473 each coordinate FAD. Catalysis depends on E475, which acts as the Proton acceptor. D477 is an FAD binding site.

Belongs to the acyl-CoA oxidase family. As to quaternary structure, homodimer. The cofactor is FAD. Expressed mainly in flowers and young seedlings. Lower expression in roots, leaves and bracts.

Its subcellular location is the peroxisome. The enzyme catalyses a 2,3-saturated acyl-CoA + O2 = a (2E)-enoyl-CoA + H2O2. Catalyzes the desaturation of long-chain acyl-CoAs to 2-trans-enoyl-CoAs. Active on substrates longer than C14 and mostly with C18-CoA. Activity on long-chain mono-unsaturated substrates is double than with the corresponding saturated substrates. In Arabidopsis thaliana (Mouse-ear cress), this protein is Acyl-coenzyme A oxidase 2, peroxisomal.